We begin with the raw amino-acid sequence, 354 residues long: Biotin synthase (354 aa).

The 225-residue stretch at 41–265 (NEVQISRLLS…LMPHSRVRLS (225 aa)) folds into the Radical SAM core domain. [4Fe-4S] cluster is bound by residues Cys-56, Cys-60, and Cys-63. Positions 100, 131, 191, and 263 each coordinate [2Fe-2S] cluster.

The protein belongs to the radical SAM superfamily. Biotin synthase family. In terms of assembly, homodimer. Requires [4Fe-4S] cluster as cofactor. The cofactor is [2Fe-2S] cluster.

The catalysed reaction is (4R,5S)-dethiobiotin + (sulfur carrier)-SH + 2 reduced [2Fe-2S]-[ferredoxin] + 2 S-adenosyl-L-methionine = (sulfur carrier)-H + biotin + 2 5'-deoxyadenosine + 2 L-methionine + 2 oxidized [2Fe-2S]-[ferredoxin]. It functions in the pathway cofactor biosynthesis; biotin biosynthesis; biotin from 7,8-diaminononanoate: step 2/2. Functionally, catalyzes the conversion of dethiobiotin (DTB) to biotin by the insertion of a sulfur atom into dethiobiotin via a radical-based mechanism. The polypeptide is Biotin synthase (Shewanella woodyi (strain ATCC 51908 / MS32)).